We begin with the raw amino-acid sequence, 162 residues long: Small ribosomal subunit protein uS5 (162 aa).

Residues 11 to 74 (LTDRVVHISR…EQAKKNLIKV (64 aa)) form the S5 DRBM domain.

Belongs to the universal ribosomal protein uS5 family. As to quaternary structure, part of the 30S ribosomal subunit. Contacts proteins S4 and S8.

Functionally, with S4 and S12 plays an important role in translational accuracy. Its function is as follows. Located at the back of the 30S subunit body where it stabilizes the conformation of the head with respect to the body. The sequence is that of Small ribosomal subunit protein uS5 from Pelobacter propionicus (strain DSM 2379 / NBRC 103807 / OttBd1).